A 513-amino-acid chain; its full sequence is Ribonuclease Y (513 aa).

Residues 4 to 24 form a helical membrane-spanning segment; it reads TTSLIIAILAGILGIVIGFFF. The segment at 78-106 is disordered; it reads KSRLKEISRQEDRLNSKEENLERKNASLE. Residues 203-288 enclose the KH domain; that stretch reads TVSVVNLPND…EMVEKARKDV (86 aa). The HD domain occupies 329-422; the sequence is VLKHSIEVSN…VQSADAISAA (94 aa).

The protein belongs to the RNase Y family.

Its subcellular location is the cell membrane. Functionally, endoribonuclease that initiates mRNA decay. In Finegoldia magna (strain ATCC 29328 / DSM 20472 / WAL 2508) (Peptostreptococcus magnus), this protein is Ribonuclease Y.